We begin with the raw amino-acid sequence, 353 residues long: WD repeat-containing protein 55 (353 aa).

WD repeat units follow at residues D4 to R43, A49 to H88, A92 to E130, A133 to Q172, F175 to D214, D218 to P257, and S260 to N299. Residues V300–L353 form a disordered region. The segment covering E310–N323 has biased composition (acidic residues). A compositionally biased stretch (low complexity) spans K339–L353.

The protein belongs to the WD repeat WDR55 family. In terms of assembly, interacts with DDB1A. In terms of tissue distribution, highly expressed in roots. Expressed in cotyledons, leaves, buds and flowers.

Its subcellular location is the nucleus. The protein localises to the cytoplasm. Functionally, required for male and female gametogenesis, seed development, and embryo and endosperm development at early stages. Involved in the establishment of bilateral symmetry in the transition from the globular to the heart embryo stage. May act in the frame of a CRL4 complex. Required for proper vegetative growth and organization of the adult plant body. May play a role in hormonal control of plant development. The protein is WD repeat-containing protein 55 of Arabidopsis thaliana (Mouse-ear cress).